The primary structure comprises 708 residues: RUN and FYVE domain-containing protein 1 (708 aa).

A compositionally biased stretch (basic and acidic residues) spans 1–17 (MADREGGCAAGRGRELE). Residues 1–57 (MADREGGCAAGRGRELEPELEPGPGPGSALEPGEEFEIVDRSQLPGPGDLRSATRPR) form a disordered region. The RUN domain occupies 139–271 (DADHAPLQQF…LDANLCLKGE (133 aa)). Residues 321-374 (TVGDLQTKIDGLEKTNSKLQEELSAATDRICSLQEEQQQLREQNELIRERSEKS) are a coiled coil. Phosphotyrosine is present on residues Y389 and Y400. Positions 405-617 (KQLKEEKKVR…QALQEMGLHL (213 aa)) form a coiled coil. The tract at residues 493 to 522 (QVMSSMKQMEERLQHSERARQGAEERSHKL) is disordered. Positions 500–522 (QMEERLQHSERARQGAEERSHKL) are enriched in basic and acidic residues. Positions 615-625 (LHLSQSKLKME) are interaction with RAB4. The residue at position 620 (S620) is a Phosphoserine. Residues 642–700 (DDEATHCRQCEKEFSISRRKHHCRNCGHIFCNTCSSNELALPSYPKPVRVCDSCHTLLL) form an FYVE-type zinc finger. 8 residues coordinate Zn(2+): C648, C651, C664, C667, C672, C675, C692, and C695.

In terms of assembly, self-assembles through coiled coil domains to drive ELVA (endo-lysosomal vesicular assembly) formation. Interacts with BMX. May interact with SSB. Interacts with RAB4 and RAB5 that have been activated by GTP-binding. Interacts WITH RAB14 and RAB4B (GTP-bound form); the interactions allow endosomal tethering and fusion. Interacts with ARL8B (GTP-bound form); the interaction is required for RUFY1 endosomal location and promotes interaction with RAB14. Post-translationally, phosphorylation on Tyr-389 and/or Tyr-400 is required for interaction with BMX and endosomal targeting. Broadly expressed, with highest levels in lung, testis, kidney and brain.

The protein localises to the early endosome membrane. Functionally, activating adapter involved in cargo sorting from early/recycling endosomes. Regulates retrieval of proteins from endosomes to the trans-Golgi network through interaction with the dynein-dynactin complex. Dual effector of RAB4B and RAB14, mediates a cooperative interaction allowing endosomal tethering and fusion. Binds phospholipid vesicles containing phosphatidylinositol 3-phosphate and participates in early endosomal trafficking. In oocytes, self-assembles to form a protein matrix which hold together endolysosomes, autophagosomes and proteasomes and generate non-membrane-bound compartments called endo-lysosomal vesicular assemblies (ELVAs). In immature oocytes, ELVAs sequester ubiquitinated protein aggregates and degrade them upon oocyte maturation. The protein is RUN and FYVE domain-containing protein 1 of Homo sapiens (Human).